The sequence spans 56 residues: Hydrophobic protein LTI6A (56 aa).

A run of 2 helical transmembrane segments spans residues 11–31 (IILAIILPPLGVFFKFGCGIE) and 34–54 (ICLLLTFFGYLPGIIYAVWVI).

This sequence belongs to the UPF0057 (PMP3) family. In terms of tissue distribution, expressed in shoot of cold stressed seedlings.

It localises to the membrane. In terms of biological role, plays a role in the regulation of membrane potential. Could mediate a proton leak. The protein is Hydrophobic protein LTI6A (LTI6A) of Oryza sativa subsp. japonica (Rice).